Here is a 200-residue protein sequence, read N- to C-terminus: NADH-quinone oxidoreductase subunit C (200 aa).

The protein belongs to the complex I 30 kDa subunit family. As to quaternary structure, NDH-1 is composed of 14 different subunits. Subunits NuoB, C, D, E, F, and G constitute the peripheral sector of the complex.

It localises to the cell inner membrane. The catalysed reaction is a quinone + NADH + 5 H(+)(in) = a quinol + NAD(+) + 4 H(+)(out). Its function is as follows. NDH-1 shuttles electrons from NADH, via FMN and iron-sulfur (Fe-S) centers, to quinones in the respiratory chain. The immediate electron acceptor for the enzyme in this species is believed to be ubiquinone. Couples the redox reaction to proton translocation (for every two electrons transferred, four hydrogen ions are translocated across the cytoplasmic membrane), and thus conserves the redox energy in a proton gradient. This is NADH-quinone oxidoreductase subunit C from Chelativorans sp. (strain BNC1).